We begin with the raw amino-acid sequence, 491 residues long: Hydroxymethylglutaryl-CoA synthase (491 aa).

Glu-127 (proton donor/acceptor) is an active-site residue. Residue Cys-159 is the Acyl-thioester intermediate of the active site. Residues Cys-159, Thr-201, and Ser-250 each contribute to the (3S)-3-hydroxy-3-methylglutaryl-CoA site. Position 276 is a phosphoserine (Ser-276). The active-site Proton donor/acceptor is His-296. 4 residues coordinate (3S)-3-hydroxy-3-methylglutaryl-CoA: His-296, Lys-305, Asn-371, and Ser-405.

The protein belongs to the thiolase-like superfamily. HMG-CoA synthase family.

The catalysed reaction is acetoacetyl-CoA + acetyl-CoA + H2O = (3S)-3-hydroxy-3-methylglutaryl-CoA + CoA + H(+). The protein operates within metabolic intermediate biosynthesis; (R)-mevalonate biosynthesis; (R)-mevalonate from acetyl-CoA: step 2/3. Its function is as follows. Hydroxymethylglutaryl-CoA synthase; part of the first module of ergosterol biosynthesis pathway that includes the early steps of the pathway, conserved across all eukaryotes, and which results in the formation of mevalonate from acetyl-coenzyme A (acetyl-CoA). ERG13 condenses acetyl-CoA with acetoacetyl-CoA to form hydroxymethylglutaryl-CoA (HMG-CoA). The first module starts with the action of the cytosolic acetyl-CoA acetyltransferase ERG10 that catalyzes the formation of acetoacetyl-CoA. The hydroxymethylglutaryl-CoA synthase ERG13 then condenses acetyl-CoA with acetoacetyl-CoA to form HMG-CoA. The rate-limiting step of the early module is the reduction to mevalonate by the 3-hydroxy-3-methylglutaryl-coenzyme A (HMG-CoA) reductases HMG1 and HMG2 which are derived from a single ancestral HMGR gene by gene duplication. This is Hydroxymethylglutaryl-CoA synthase from Saccharomyces cerevisiae (strain ATCC 204508 / S288c) (Baker's yeast).